The following is a 261-amino-acid chain: Indole-3-glycerol phosphate synthase (261 aa).

Belongs to the TrpC family.

It catalyses the reaction 1-(2-carboxyphenylamino)-1-deoxy-D-ribulose 5-phosphate + H(+) = (1S,2R)-1-C-(indol-3-yl)glycerol 3-phosphate + CO2 + H2O. It functions in the pathway amino-acid biosynthesis; L-tryptophan biosynthesis; L-tryptophan from chorismate: step 4/5. The polypeptide is Indole-3-glycerol phosphate synthase (Burkholderia pseudomallei (strain 1106a)).